Consider the following 212-residue polypeptide: Thylakoid membrane protein slr1949 (212 aa).

The helical transmembrane segment at 109-131 threads the bilayer; the sequence is WVQDGLLLLLALGLCGISGYRLW. Residues 180 to 212 are a coiled coil; it reads PNRRQRKQYETRLQALRQSAAKMKAKTQKAKAL.

It localises to the cellular thylakoid membrane. In Synechocystis sp. (strain ATCC 27184 / PCC 6803 / Kazusa), this protein is Thylakoid membrane protein slr1949.